A 502-amino-acid polypeptide reads, in one-letter code: Glutamate decarboxylase (502 aa).

Lys278 carries the N6-(pyridoxal phosphate)lysine modification. The segment at 471-502 (GLHHFHMDTVETQKDIIKHWRKIAGKKTSGVC) is calmodulin-binding.

This sequence belongs to the group II decarboxylase family. Requires pyridoxal 5'-phosphate as cofactor.

It catalyses the reaction L-glutamate + H(+) = 4-aminobutanoate + CO2. Functionally, catalyzes the production of GABA. The calmodulin-binding is calcium-dependent and it is proposed that this may, directly or indirectly, form a calcium regulated control of GABA biosynthesis. The chain is Glutamate decarboxylase from Solanum lycopersicum (Tomato).